The chain runs to 1203 residues: Cation-transporting ATPase catp-5 (1203 aa).

Residues 1-68 lie on the Cytoplasmic side of the membrane; the sequence is MNTSEREPLL…YAYKETIGRQ (68 aa). The tract at residues 21–42 is disordered; that stretch reads TTDNPSTKIMKREKDNPKAKTT. A helical transmembrane segment spans residues 69–89; sequence ILFWLLTIVTLGFYQLLAYWV. Residues 90-209 are Extracellular-facing; that stretch reads KSLFVKVRFQ…RKIYNMNALA (120 aa). The chain crosses the membrane as a helical span at residues 210–230; the sequence is LALTPILVILFKEVLGPFYLF. The Cytoplasmic portion of the chain corresponds to 231–242; sequence QCFSVALWYSDN. A helical membrane pass occupies residues 243-263; sequence YAYYASVIVIITVGSAAVAVY. The Extracellular segment spans residues 264-297; sequence QMRAQEKRIRNMVGDTISVIVRRDGHDITIDASE. The helical transmembrane segment at 298–318 threads the bilayer; it reads IVPMDILILPSNTFILPCDCL. The Cytoplasmic portion of the chain corresponds to 319 to 414; sequence LMNGTVIVNE…KPQEKEALKD (96 aa). The chain crosses the membrane as a helical span at residues 415–435; that stretch reads VMVFILVLGFIALIGFIYTVI. Over 436–451 the chain is Extracellular; sequence EMVSRGESLKHIIIRS. Residues 452–472 form a helical membrane-spanning segment; sequence LDIITIVVPPALPAAMSVGII. Residues 473–935 lie on the Cytoplasmic side of the membrane; it reads NANSRLKKKK…KEGRCALVTS (463 aa). D503 serves as the catalytic 4-aspartylphosphate intermediate. The tract at residues 595-617 is disordered; it reads ETQDFDTVQPTVLRPPPEQATYH. 2 residues coordinate Mg(2+): D883 and D887. The helical transmembrane segment at 936 to 956 threads the bilayer; that stretch reads YAVSKYMAAYSLNEFLSVMLL. The Extracellular portion of the chain corresponds to 957–962; it reads YNDGTN. Residues 963 to 983 form a helical membrane-spanning segment; it reads ISDGQFLYIDLVLITLVALFL. Residues 984–1007 are Cytoplasmic-facing; sequence GNTEASRKLSGIPPPRRLATSAFY. A helical transmembrane segment spans residues 1008 to 1028; the sequence is FSVFGQMFFNIITQTTGYLLV. Over 1029-1046 the chain is Extracellular; the sequence is RGQSWYVPNPEELDNTTT. The helical transmembrane segment at 1047-1067 threads the bilayer; it reads MIGTTVFFTSCCMYLGYAFVY. Residues 1068 to 1085 are Cytoplasmic-facing; it reads SKGHPYRRSVFTNWLLCG. A helical membrane pass occupies residues 1086 to 1106; sequence IIFVIGAINMVMIFTNMGFLM. Over 1107-1120 the chain is Extracellular; that stretch reads NLMGFVYVPSTSMR. The helical transmembrane segment at 1121 to 1141 threads the bilayer; the sequence is FILLAISLAGVFLSLLYEHFF. Residues 1142–1203 lie on the Cytoplasmic side of the membrane; that stretch reads VEKVVAIHFE…DRKETIESKC (62 aa).

This sequence belongs to the cation transport ATPase (P-type) (TC 3.A.3) family. Type V subfamily. Expressed in the 20 intestinal cells and in the excretory cell.

It localises to the apical cell membrane. It carries out the reaction ATP + H2O = ADP + phosphate + H(+). Its function is as follows. Involved in the uptake and/or transport of polyamines, probably through ATP hydrolysis. This contributes to the maintenance of intracellular polyamine levels. Polyamines are essential for cell proliferation and are implicated in cellular processes, ranging from DNA replication to apoptosis. The polypeptide is Cation-transporting ATPase catp-5 (Caenorhabditis elegans).